Here is a 273-residue protein sequence, read N- to C-terminus: Large ribosomal subunit protein uL2 (273 aa).

Positions 228-273 are disordered; the sequence is VDHPHGGGEGKTSGGRHPVTPWGFPTKGKKTRKNKRTSKFIIKKRK. Residues 254–273 are compositionally biased toward basic residues; it reads KGKKTRKNKRTSKFIIKKRK.

The protein belongs to the universal ribosomal protein uL2 family. As to quaternary structure, part of the 50S ribosomal subunit. Forms a bridge to the 30S subunit in the 70S ribosome.

Functionally, one of the primary rRNA binding proteins. Required for association of the 30S and 50S subunits to form the 70S ribosome, for tRNA binding and peptide bond formation. It has been suggested to have peptidyltransferase activity; this is somewhat controversial. Makes several contacts with the 16S rRNA in the 70S ribosome. The chain is Large ribosomal subunit protein uL2 from Rickettsia bellii (strain OSU 85-389).